Consider the following 73-residue polypeptide: V-type proton ATPase subunit e (73 aa).

At 1–3 the chain is on the lumenal side; it reads MSS. Residues 4–24 form a helical membrane-spanning segment; it reads FYTVVGVFIVVSAMSVLFWIM. Over 25–35 the chain is Cytoplasmic; sequence APKNNQAVWRS. A helical transmembrane segment spans residues 36–56; sequence TVILTLAMMFLMWAITFLCQL. At 57 to 73 the chain is on the lumenal side; it reads HPLVAPRRSDLRPEFAE.

It belongs to the V-ATPase e1/e2 subunit family. In terms of assembly, V-ATPase is a heteromultimeric enzyme composed of a peripheral catalytic V1 complex (components A to H) attached to an integral membrane V0 proton pore complex (components: a, c, c', c'', d, e, f and VOA1).

The protein resides in the vacuole membrane. Its function is as follows. Subunit of the V0 complex of vacuolar(H+)-ATPase (V-ATPase), a multisubunit enzyme composed of a peripheral complex (V1) that hydrolyzes ATP and a membrane integral complex (V0) that translocates protons. V-ATPase is responsible for acidifying and maintaining the pH of intracellular compartments. This chain is V-type proton ATPase subunit e (VMA9), found in Saccharomyces cerevisiae (strain ATCC 204508 / S288c) (Baker's yeast).